The following is a 432-amino-acid chain: Adenylosuccinate synthetase (432 aa).

Residues 13-19 and 41-43 contribute to the GTP site; these read GDEGKGK and GHT. Asp14 functions as the Proton acceptor in the catalytic mechanism. 2 residues coordinate Mg(2+): Asp14 and Gly41. Residues 14–17, 39–42, Thr130, Arg144, Gln225, Thr240, and Arg304 each bind IMP; these read DEGK and NAGH. His42 serves as the catalytic Proton donor. 300 to 306 is a substrate binding site; it reads ATTGRKR. Residues Arg306, 332 to 334, and 415 to 417 contribute to the GTP site; these read KLD and STG.

Belongs to the adenylosuccinate synthetase family. As to quaternary structure, homodimer. Mg(2+) is required as a cofactor.

The protein resides in the cytoplasm. It carries out the reaction IMP + L-aspartate + GTP = N(6)-(1,2-dicarboxyethyl)-AMP + GDP + phosphate + 2 H(+). The protein operates within purine metabolism; AMP biosynthesis via de novo pathway; AMP from IMP: step 1/2. Its function is as follows. Plays an important role in the de novo pathway of purine nucleotide biosynthesis. Catalyzes the first committed step in the biosynthesis of AMP from IMP. This chain is Adenylosuccinate synthetase, found in Vibrio cholerae serotype O1 (strain ATCC 39541 / Classical Ogawa 395 / O395).